Consider the following 206-residue polypeptide: Large ribosomal subunit protein uL4 (206 aa).

Positions 47–75 are disordered; that stretch reads GTQSAKTRAEVSGGGIKPWRQKGTGRARQ.

This sequence belongs to the universal ribosomal protein uL4 family. In terms of assembly, part of the 50S ribosomal subunit.

Its function is as follows. One of the primary rRNA binding proteins, this protein initially binds near the 5'-end of the 23S rRNA. It is important during the early stages of 50S assembly. It makes multiple contacts with different domains of the 23S rRNA in the assembled 50S subunit and ribosome. In terms of biological role, forms part of the polypeptide exit tunnel. This chain is Large ribosomal subunit protein uL4, found in Clostridium botulinum (strain 657 / Type Ba4).